The following is a 100-amino-acid chain: Replication restart protein PriB (100 aa).

The SSB domain occupies 1 to 99 (MGFNNLVSLA…LRIQNIQEYK (99 aa)).

Belongs to the PriB family. As to quaternary structure, homodimer. Interacts with PriA and DnaT. Component of the replication restart primosome. Primosome assembly occurs via a 'hand-off' mechanism. PriA binds to replication forks, subsequently PriB then DnaT bind; DnaT then displaces ssDNA to generate the helicase loading substrate.

Functionally, involved in the restart of stalled replication forks, which reloads the replicative helicase on sites other than the origin of replication; the PriA-PriB pathway is the major replication restart pathway. During primosome assembly it facilitates complex formation between PriA and DnaT on DNA; stabilizes PriA on DNA. Stimulates the DNA unwinding activity of PriA helicase. This chain is Replication restart protein PriB, found in Neisseria meningitidis serogroup A / serotype 4A (strain DSM 15465 / Z2491).